A 36-amino-acid polypeptide reads, in one-letter code: Photosystem I reaction center subunit VIII (36 aa).

A helical transmembrane segment spans residues 9–29; that stretch reads ILVPLVGLIFPAFSMALFFLY.

Belongs to the PsaI family.

The protein resides in the plastid. It localises to the chloroplast thylakoid membrane. May help in the organization of the PsaL subunit. This is Photosystem I reaction center subunit VIII from Thalassiosira pseudonana (Marine diatom).